A 455-amino-acid polypeptide reads, in one-letter code: UDP-N-acetylmuramoylalanine--D-glutamate ligase (455 aa).

119 to 125 is an ATP binding site; the sequence is GTNGKTT.

The protein belongs to the MurCDEF family.

Its subcellular location is the cytoplasm. It carries out the reaction UDP-N-acetyl-alpha-D-muramoyl-L-alanine + D-glutamate + ATP = UDP-N-acetyl-alpha-D-muramoyl-L-alanyl-D-glutamate + ADP + phosphate + H(+). The protein operates within cell wall biogenesis; peptidoglycan biosynthesis. Cell wall formation. Catalyzes the addition of glutamate to the nucleotide precursor UDP-N-acetylmuramoyl-L-alanine (UMA). This chain is UDP-N-acetylmuramoylalanine--D-glutamate ligase, found in Listeria innocua serovar 6a (strain ATCC BAA-680 / CLIP 11262).